The chain runs to 211 residues: V-type ATP synthase subunit D (211 aa).

It belongs to the V-ATPase D subunit family.

Functionally, produces ATP from ADP in the presence of a proton gradient across the membrane. In Fusobacterium nucleatum subsp. nucleatum (strain ATCC 25586 / DSM 15643 / BCRC 10681 / CIP 101130 / JCM 8532 / KCTC 2640 / LMG 13131 / VPI 4355), this protein is V-type ATP synthase subunit D.